The chain runs to 923 residues: Mitochondrial 10-formyltetrahydrofolate dehydrogenase (923 aa).

The N-terminal 19 residues, 1 to 19 (MLWRGSQALRHFSTSRVYF), are a transit peptide targeting the mitochondrion; not cleaved. The segment at 23-331 (LKLALIGQSL…PASQYFSAGE (309 aa)) is hydrolase domain. The residue at position 31 (S31) is a Phosphoserine. K60 is subject to N6-succinyllysine. Residue 110-112 (QFI) participates in (6R)-10-formyltetrahydrofolate binding. Catalysis depends on H128, which acts as the Proton donor. Position 164 (D164) interacts with (6R)-10-formyltetrahydrofolate. Residues 339–416 (AEELKVAETI…DFIQKVVRRL (78 aa)) enclose the Carrier domain. S375 is modified (O-(pantetheine 4'-phosphoryl)serine). An aldehyde dehydrogenase domain region spans residues 438–923 (TVKIPYQCFI…LKIKTVTLEY (486 aa)). NADP(+)-binding positions include 592 to 594 (IPW) and 618 to 621 (KPAQ). At S650 the chain carries Phosphoserine. Residues 651 to 656 (GGVAGQ) and 671 to 672 (GS) each bind NADP(+). K681 is subject to N6-succinyllysine. The active-site Proton acceptor is E694. 694-695 (EL) is a binding site for NADP(+). C728 functions as the Proton donor in the catalytic mechanism. NADP(+)-binding positions include K778 and 825 to 827 (ESF). K903 is subject to N6-acetyllysine.

In the N-terminal section; belongs to the GART family. It in the C-terminal section; belongs to the aldehyde dehydrogenase family. ALDH1L subfamily. Phosphopantetheinylation at Ser-375 by AASDHPPT is required for the formyltetrahydrofolate dehydrogenase activity.

The protein localises to the mitochondrion. It carries out the reaction (6R)-10-formyltetrahydrofolate + NADP(+) + H2O = (6S)-5,6,7,8-tetrahydrofolate + CO2 + NADPH + H(+). Its function is as follows. Mitochondrial 10-formyltetrahydrofolate dehydrogenase that catalyzes the NADP(+)-dependent conversion of 10-formyltetrahydrofolate to tetrahydrofolate and carbon dioxide. This Mus musculus (Mouse) protein is Mitochondrial 10-formyltetrahydrofolate dehydrogenase.